The sequence spans 117 residues: Large ribosomal subunit protein bL19 (117 aa).

It belongs to the bacterial ribosomal protein bL19 family.

Functionally, this protein is located at the 30S-50S ribosomal subunit interface and may play a role in the structure and function of the aminoacyl-tRNA binding site. The chain is Large ribosomal subunit protein bL19 from Shewanella pealeana (strain ATCC 700345 / ANG-SQ1).